The sequence spans 231 residues: Somatolactin (231 aa).

The signal sequence occupies residues 1–24; sequence MNMMTVKQQGVWAALLWPYLLTAS. Intrachain disulfides connect cysteine 29–cysteine 39, cysteine 89–cysteine 205, and cysteine 222–cysteine 230. N-linked (GlcNAc...) asparagine glycosylation occurs at asparagine 145.

Belongs to the somatotropin/prolactin family. In terms of tissue distribution, pituitary gland.

It localises to the secreted. The chain is Somatolactin from Paralichthys olivaceus (Bastard halibut).